Reading from the N-terminus, the 563-residue chain is MDIRRTVLWMIFSFSLLLLWNNWQIHNGKPSLFGGPAPEAAATQQPKADANGTAASSTASIPSSPAAAPAAASVPGAAAPAAAKSEQVVITTDVLRLTFDSNGAQLIRAELLKYPSSSQSDKPTVLMDRSADLVYVAQTGVVGAPQGESFPTHQTPFHLVSSERSLTGDTLDVVFEAESGGLKVTKTYTLHRGRYDVDVRHAMANTGGAPLNPALYLQLERDGTDPAGTSSFYHTFTGVAVYSEQDKFQKVTFSDIEKKKGTYIKQADNGWIGIVQHYFATAWIPAQGKQRTNELLQVQQNLYAARTIEAVGTIAPGSSANVDAHLWVGPQDQKAMAAVAPGLELVVDYGWLTIIAKPLFTLMTWLHGLLGNWGWTIVALTVIIKAVFFPLAAASYRSMARMKQVAPRLQALKEKYGDDRQKLNQAMMEMYRTEKINPLGGCLPMVVQIPVFIALYWVLLASVEMRGAPWILWVHDLSVRDPFFILPAIMMATMFLQIKLNPTPPDPVQAKVMMIMPLVFGGMMFFFPAGLVLYWCVNNTLSIAQQWTITRNLERQAAAAANR.

A helical transmembrane segment spans residues 6–26 (TVLWMIFSFSLLLLWNNWQIH). Residues 36–70 (PAPEAAATQQPKADANGTAASSTASIPSSPAAAPA) are disordered. The segment covering 54-70 (AASSTASIPSSPAAAPA) has biased composition (low complexity). The next 4 membrane-spanning stretches (helical) occupy residues 373–393 (WGWT…PLAA), 443–463 (LPMV…LASV), 482–502 (PFFI…KLNP), and 512–532 (VMMI…AGLV).

Belongs to the OXA1/ALB3/YidC family. Type 1 subfamily. As to quaternary structure, interacts with the Sec translocase complex via SecD. Specifically interacts with transmembrane segments of nascent integral membrane proteins during membrane integration.

Its subcellular location is the cell membrane. Functionally, required for the insertion and/or proper folding and/or complex formation of integral membrane proteins into the membrane. Involved in integration of membrane proteins that insert both dependently and independently of the Sec translocase complex, as well as at least some lipoproteins. Aids folding of multispanning membrane proteins. The chain is Membrane protein insertase YidC from Bordetella bronchiseptica (strain ATCC BAA-588 / NCTC 13252 / RB50) (Alcaligenes bronchisepticus).